A 72-amino-acid polypeptide reads, in one-letter code: Translation initiation factor IF-1 2 (72 aa).

Positions 1–72 (MAKEDTIQMQ…SRARIVFRAK (72 aa)) constitute an S1-like domain.

It belongs to the IF-1 family. Component of the 30S ribosomal translation pre-initiation complex which assembles on the 30S ribosome in the order IF-2 and IF-3, IF-1 and N-formylmethionyl-tRNA(fMet); mRNA recruitment can occur at any time during PIC assembly.

It localises to the cytoplasm. One of the essential components for the initiation of protein synthesis. Stabilizes the binding of IF-2 and IF-3 on the 30S subunit to which N-formylmethionyl-tRNA(fMet) subsequently binds. Helps modulate mRNA selection, yielding the 30S pre-initiation complex (PIC). Upon addition of the 50S ribosomal subunit IF-1, IF-2 and IF-3 are released leaving the mature 70S translation initiation complex. The sequence is that of Translation initiation factor IF-1 2 from Chromobacterium violaceum (strain ATCC 12472 / DSM 30191 / JCM 1249 / CCUG 213 / NBRC 12614 / NCIMB 9131 / NCTC 9757 / MK).